The following is a 1320-amino-acid chain: MGTTTMGVKLDDATRERIKMAASRIDRTPHWLIKQAIFSYLDKLENSDTLPELPALFVGAANESEEPVAPQDEPHQPFLEFAEQILPQSVSRAAITAAWRRPETDAVSMLMEQARLSPPVAEQAHKLAYQLAEKLRNQKSASGRAGMVQGLLQEFSLSSQEGVALMCLAEALLRIPDKATRDALIRDKISNGNWQSHIGRSPSLFVNAATWGLLFTGRLVSTHNEANLSRSLNRIIGKSGEPLIRKGVDMAMRLMGEQFVTGETIAQALANARKLEEKGFRYSYDMLGEAALTAADAQAYMVSYQQAIHAIGKASNGRGIYEGPGISIKLSALHPRYSRAQYDRVMEELYPRLKSLTLLARQYDIGLNIDAEEADRLEISLDLLEKLCFEPELAGWNGIGFVIQAYQKRCPLVIDYLVDLASRSRRRLMIRLVKGAYWDSEIKRAQMEGLEGYPVYTRKVYTDVSYLACAKKLLAVPNLIYPQFATHNAHTLAAIYHLAGQNYYPGQYEFQCLHGMGEPLYEQVTGKVADGKLNRPCRIYAPVGTHETLLAYLVRRLLENGANTSFVNRIADATLPLDELVADPVEAVEKLAQQEGQAGIPHPKIPLPRDLYGEGRINSAGLDLANEHRLASLSSALLSNAMQKWQAKPVLEQPVADGEMTPVINPAEPKDIVGWGREATESEVEQALQNAVNQAPVWFATPPQERAAILQRAAVLMEDQMQQLIGLLVREAGKTFSNAIAEVREAVDFLHYYAGQVRDDFDNETHRPLGPVVCISPWNFPLAIFTGQIAAALAAGNSVLAKPAEQTSLIAAQGIAILLEAGVPPGVVQLLPGRGETVGAQLTADARVRGVMFTGSTEVATLLQRNIATRLDAQGRPIPLIAETGGMNAMIVDSSALTEQVVVDVLASAFDSAGQRCSALRVLCLQDDIAEHTLKMLRGAMAECRMGNPGRLTTDIGPVIDSEAKANIERHIQTMRAKGRPVFQAARENSDDAQEWQTGTFVMPTLIELENFAELEKEVFGPVLHVVRYNRNQLAELIEQINASGYGLTLGVHTRIDETIAQVTGSAHVGNLYVNRNMVGAVVGVQPFGGEGLSGTGPKAGGPLYLYRLLAHRPPNALNTTLTRQDARYPVDAQLKTTLLAPLTALTQWAADRPALQTLCRQFADLAQAGTQRLLPGPTGERNTWTLLPRERVLCLADDEQDALTQLAAVLAVGSQALWSDDAFHRDLAKRLPAAVAARVQFAKAETLMAQPFDAVIFHGDSDKLRTVCEAVAAREGAIVSVQGFARGESNILLERLYIERSLSVNTAAAGGNASLMTIG.

Positions 228–574 (LSRSLNRIIG…SFVNRIADAT (347 aa)) are proline dehydrogenase. The segment at 653 to 1119 (QPVADGEMTP…LAHRPPNALN (467 aa)) is aldehyde dehydrogenase. Active-site residues include E883 and C917.

It in the N-terminal section; belongs to the proline dehydrogenase family. This sequence in the C-terminal section; belongs to the aldehyde dehydrogenase family. The cofactor is FAD.

It catalyses the reaction L-proline + a quinone = (S)-1-pyrroline-5-carboxylate + a quinol + H(+). The enzyme catalyses L-glutamate 5-semialdehyde + NAD(+) + H2O = L-glutamate + NADH + 2 H(+). It participates in amino-acid degradation; L-proline degradation into L-glutamate; L-glutamate from L-proline: step 1/2. It functions in the pathway amino-acid degradation; L-proline degradation into L-glutamate; L-glutamate from L-proline: step 2/2. In terms of biological role, oxidizes proline to glutamate for use as a carbon and nitrogen source and also function as a transcriptional repressor of the put operon. The polypeptide is Bifunctional protein PutA (putA) (Salmonella typhimurium (strain LT2 / SGSC1412 / ATCC 700720)).